The primary structure comprises 109 residues: Gliadoralin-A (109 aa).

Positions Met-1–Ala-16 are cleaved as a signal peptide. Pyrrolidone carboxylic acid is present on Gln-17. The interval Gln-17–Val-109 is disordered. Over residues Pro-35–Val-109 the composition is skewed to low complexity. Positions Arg-107–Val-109 are excised as a propeptide.

Post-translationally, predominantly proteolytically processed at its C-terminus before secretion to produce the major form gliadoralin A 1-90. Further proteloytically processed after secretion to produce minor forms. Potential substrate of transglutaminase. As to expression, found in saliva (at protein level). Secreted from the submandibular gland.

It localises to the secreted. May play a role in the formation of the protective mucosal protein pellicle involved in the reinforcement and protection of oral mucosal epithelial surface. The sequence is that of Gliadoralin-A from Rattus norvegicus (Rat).